Consider the following 727-residue polypeptide: Phosphoribosylformylglycinamidine synthase subunit PurL (727 aa).

Residue H47 is part of the active site. 2 residues coordinate ATP: Y50 and K89. E91 is a binding site for Mg(2+). Substrate-binding positions include 92–95 (SHNH) and R114. The active-site Proton acceptor is H93. Mg(2+) is bound at residue D115. Position 238 (Q238) interacts with substrate. Residue D266 coordinates Mg(2+). A substrate-binding site is contributed by 310–312 (ESQ). Residues D490 and G527 each coordinate ATP. Mg(2+) is bound at residue N528. S530 serves as a coordination point for substrate.

Belongs to the FGAMS family. Monomer. Part of the FGAM synthase complex composed of 1 PurL, 1 PurQ and 2 PurS subunits.

The protein resides in the cytoplasm. The catalysed reaction is N(2)-formyl-N(1)-(5-phospho-beta-D-ribosyl)glycinamide + L-glutamine + ATP + H2O = 2-formamido-N(1)-(5-O-phospho-beta-D-ribosyl)acetamidine + L-glutamate + ADP + phosphate + H(+). The protein operates within purine metabolism; IMP biosynthesis via de novo pathway; 5-amino-1-(5-phospho-D-ribosyl)imidazole from N(2)-formyl-N(1)-(5-phospho-D-ribosyl)glycinamide: step 1/2. In terms of biological role, part of the phosphoribosylformylglycinamidine synthase complex involved in the purines biosynthetic pathway. Catalyzes the ATP-dependent conversion of formylglycinamide ribonucleotide (FGAR) and glutamine to yield formylglycinamidine ribonucleotide (FGAM) and glutamate. The FGAM synthase complex is composed of three subunits. PurQ produces an ammonia molecule by converting glutamine to glutamate. PurL transfers the ammonia molecule to FGAR to form FGAM in an ATP-dependent manner. PurS interacts with PurQ and PurL and is thought to assist in the transfer of the ammonia molecule from PurQ to PurL. The chain is Phosphoribosylformylglycinamidine synthase subunit PurL from Acidiphilium cryptum (strain JF-5).